Here is a 194-residue protein sequence, read N- to C-terminus: Adenylate kinase (194 aa).

10 to 15 (GAGKGT) provides a ligand contact to ATP. The NMP stretch occupies residues 30 to 59 (STGDMLRAAVAQQSEIGKRAKAVMDAGQLV). Residues Thr-31, Arg-36, 57–59 (QLV), 85–88 (GYPR), and Gln-92 each bind AMP. The LID stretch occupies residues 126–142 (SRVAETIAKGGQVRSDD). Arg-127 serves as a coordination point for ATP. The AMP site is built by Arg-139 and Arg-150. Ala-178 lines the ATP pocket.

The protein belongs to the adenylate kinase family. Monomer.

It is found in the cytoplasm. It catalyses the reaction AMP + ATP = 2 ADP. The protein operates within purine metabolism; AMP biosynthesis via salvage pathway; AMP from ADP: step 1/1. Its function is as follows. Catalyzes the reversible transfer of the terminal phosphate group between ATP and AMP. Plays an important role in cellular energy homeostasis and in adenine nucleotide metabolism. This is Adenylate kinase from Brucella abortus (strain S19).